Consider the following 552-residue polypeptide: Putative acetolactate synthase large subunit IlvB2 (552 aa).

A thiamine diphosphate-binding site is contributed by E48. Residues 262 to 285 (FGDG…VGVS) and 309 to 328 (DPDP…ITTS) contribute to the FAD site. A thiamine pyrophosphate binding region spans residues 394–474 (TCISWTFRGI…VTWAVLNDGQ (81 aa)). D445 contacts Mg(2+).

This sequence belongs to the TPP enzyme family. Heterodimer of large catalytic subunit and small regulatory subunit. Requires Mg(2+) as cofactor. The cofactor is thiamine diphosphate.

It catalyses the reaction 2 pyruvate + H(+) = (2S)-2-acetolactate + CO2. The protein operates within amino-acid biosynthesis; L-isoleucine biosynthesis; L-isoleucine from 2-oxobutanoate: step 1/4. It participates in amino-acid biosynthesis; L-valine biosynthesis; L-valine from pyruvate: step 1/4. Functionally, catalyzes the conversion of 2 pyruvate molecules into acetolactate in the first common step of the biosynthetic pathway of the branched-amino acids such as leucine, isoleucine, and valine. The protein is Putative acetolactate synthase large subunit IlvB2 (ilvB2) of Mycobacterium tuberculosis (strain ATCC 25618 / H37Rv).